A 152-amino-acid chain; its full sequence is Small ribosomal subunit protein uS19z (152 aa).

It belongs to the universal ribosomal protein uS19 family.

It localises to the cytoplasm. This chain is Small ribosomal subunit protein uS19z (RPS15B), found in Arabidopsis thaliana (Mouse-ear cress).